The sequence spans 144 residues: Large ribosomal subunit protein uL13 (144 aa).

This sequence belongs to the universal ribosomal protein uL13 family. As to quaternary structure, part of the 50S ribosomal subunit.

This protein is one of the early assembly proteins of the 50S ribosomal subunit, although it is not seen to bind rRNA by itself. It is important during the early stages of 50S assembly. The chain is Large ribosomal subunit protein uL13 from Mycoplasma mobile (strain ATCC 43663 / 163K / NCTC 11711) (Mesomycoplasma mobile).